Reading from the N-terminus, the 822-residue chain is MATPRGRTKKKASFDHSPDSLPLRSSGRQAKKKATETTDEDEDGGSEKKYRKCEKAGCTATCPVCFASASERCAKNGYTSRWYHLSCGEHFCNECFDHYYRSHKDGYDKYTTWKKIWTSNGKTEPSPKAFMADQQLPYWVQCTKPECRKWRQLTKEIQLTPQIAKTYRCGMKPNTAIKPETSDHCSLPEDLRVLEVSNHWWYSMLILPPLLKDSVAAPLLSAYYPDCVGMSPSCTSTNRAAATGNASPGKLEHSKAALSVHVPGMNRYFQPFYQPNECGKALCVRPDVMELDELYEFPEYSRDPTMYLALRNLILALWYTNCKEALTPQKCIPHIIVRGLVRIRCVQEVERILYFMTRKGLINTGVLSVGADQYLLPKDYHNKSVIIIGAGPAGLAAARQLHNFGIKVTVLEAKDRIGGRVWDDKSFKGVTVGRGAQIVNGCINNPVALMCEQLGISMHKFGERCDLIQEGGRITDPTIDKRMDFHFNALLDVVSEWRKDKTQLQDVPLGEKIEEIYKAFIKESGIQFSELEGQVLQFHLSNLEYACGSNLHQVSARSWDHNEFFAQFAGDHTLLTPGYSVIIEKLAEGLDIQLKSPVQCIDYSGDEVQVTTTDGTGYSAQKVLVTVPLALLQKGAIQFNPPLSEKKMKAINSLGAGIIEKIALQFPYRFWDSKVQGADFFGHVPPSASKRGLFAVFYDMDPQKKHSVLMSVIAGEAVASVRTLDDKQVLQQCMATLRELFKEQEVPDPTKYFVTRWSTDPWIQMAYSFVKTGGSGEAYDIIAEDIQGTVFFAGEATNRHFPQTVTGAYLSGVREASKIAAF.

Positions 1–11 are enriched in basic residues; that stretch reads MATPRGRTKKK. Residues 1-47 are disordered; sequence MATPRGRTKKKASFDHSPDSLPLRSSGRQAKKKATETTDEDEDGGSE. Phosphoserine occurs at positions 13, 17, and 26. Residues cysteine 53, cysteine 58, cysteine 65, cysteine 73, histidine 84, histidine 90, cysteine 92, cysteine 95, cysteine 142, cysteine 147, cysteine 169, and cysteine 185 each contribute to the Zn(2+) site. The CW-type zinc finger occupies 133-193; that stretch reads DQQLPYWVQC…HCSLPEDLRV (61 aa). Residue serine 247 is modified to Phosphoserine. A GLYR1-binding region spans residues 273–292; it reads YQPNECGKALCVRPDVMELD. One can recognise an SWIRM domain in the interval 275-373; the sequence is PNECGKALCV…TGVLSVGADQ (99 aa). 383-439 contributes to the FAD binding site; sequence KSVIIIGAGPAGLAAARQLHNFGIKVTVLEAKDRIGGRVWDDKSFKGVTVGRGAQIV. 3 histone H3-binding regions span residues 438-467, 487-498, and 538-572; these read IVNG…RCDL, FNALLDVVSEWR, and FHLS…AGDH. The GLYR1-binding stretch occupies residues 564–566; that stretch reads FFA. Residues valine 598, glutamate 795, and 803–805 each bind FAD; that span reads QTV. The tract at residues 798–814 is GLYR1-binding; sequence NRHFPQTVTGAYLSGVR.

Belongs to the flavin monoamine oxidase family. Interacts with its cofactor GLYR1 at nucleosomes; this interaction stimulates H3K4me1 and H3K4me2 demethylation. In contrast to KDM1A, does not form a complex with RCOR1/CoREST. Possible accessory component of the polycomb repressive deubiquitinase (PR-DUB) complex, at least composed of BAP1, one of ASXL1, ASXL2 or (probably) ASXL3 and one of MBD5 or MBD6. The PR-DUB core associates with a number of accessory proteins, including FOXK1, FOXK2, KDM1B, HCFC1 and OGT; KDM1B specifically associates with ASXL2 PR-DUB complexes. It depends on FAD as a cofactor. Requires Zn(2+) as cofactor.

The protein resides in the nucleus. Its subcellular location is the chromosome. It catalyses the reaction N(6),N(6)-dimethyl-L-lysyl(4)-[histone H3] + 2 A + 2 H2O = L-lysyl(4)-[histone H3] + 2 formaldehyde + 2 AH2. The enzyme catalyses N(6)-methyl-L-lysyl(4)-[histone H3] + A + H2O = L-lysyl(4)-[histone H3] + formaldehyde + AH2. With respect to regulation, histone H3K4me1 and H3K4me2 demethylase activity is inhibited by DNA, this inhibition is released in complex with GLYR1. Functionally, histone demethylase that demethylates 'Lys-4' of histone H3, a specific tag for epigenetic transcriptional activation, thereby acting as a corepressor. Required for de novo DNA methylation of a subset of imprinted genes during oogenesis. Acts by oxidizing the substrate by FAD to generate the corresponding imine that is subsequently hydrolyzed. Demethylates both mono- and di-methylated 'Lys-4' of histone H3. Has no effect on tri-methylated 'Lys-4', mono-, di- or tri-methylated 'Lys-9', mono-, di- or tri-methylated 'Lys-27', mono-, di- or tri-methylated 'Lys-36' of histone H3, or on mono-, di- or tri-methylated 'Lys-20' of histone H4. Alone, it is unable to demethylate H3K4me on nucleosomes and requires the presence of GLYR1 to achieve such activity, they form a multifunctional enzyme complex that modifies transcribed chromatin and facilitates Pol II transcription through nucleosomes. This is Lysine-specific histone demethylase 2 from Homo sapiens (Human).